Reading from the N-terminus, the 156-residue chain is Small ribosomal subunit protein uS7 (156 aa).

The protein belongs to the universal ribosomal protein uS7 family. Part of the 30S ribosomal subunit. Contacts proteins S9 and S11.

One of the primary rRNA binding proteins, it binds directly to 16S rRNA where it nucleates assembly of the head domain of the 30S subunit. Is located at the subunit interface close to the decoding center, probably blocks exit of the E-site tRNA. The chain is Small ribosomal subunit protein uS7 from Idiomarina loihiensis (strain ATCC BAA-735 / DSM 15497 / L2-TR).